Consider the following 336-residue polypeptide: Antigen-presenting glycoprotein CD1d1 (336 aa).

The N-terminal stretch at 1–21 (MRYLPWLLLWAFLQVWGQSEA) is a signal peptide. The Extracellular portion of the chain corresponds to 22–305 (QQKNYTFRCL…YWDARQAPVG (284 aa)). N-linked (GlcNAc...) asparagine glycosylation is found at N25, N38, and N60. D98 contributes to the a D-galactosylceramide binding site. Cystine bridges form between C122–C186 and C226–C281. N128 is a glycosylation site (N-linked (GlcNAc...) asparagine). A D-galactosylceramide is bound at residue 171–174 (DQGT). N183 is a glycosylation site (N-linked (GlcNAc...) asparagine). One can recognise an Ig-like domain in the interval 207-297 (PVAWLSSVPS…LGGQDIILYW (91 aa)). The helical transmembrane segment at 306–326 (LIVFIVLIMLVVVGAVVYYIW) threads the bilayer. Topologically, residues 327 to 336 (RRRSAYQDIR) are cytoplasmic. Residues 332–335 (YQDI) carry the Internalization signal motif.

As to quaternary structure, heterodimer with B2M (beta-2-microglobulin). Interacts with MHC II and CD74. In terms of processing, N-glycosylated. Expressed on cortical thymocytes, on certain T-cell leukemias, and in various other tissues.

The protein localises to the cell membrane. It is found in the endosome membrane. Its subcellular location is the lysosome membrane. In terms of biological role, antigen-presenting protein that binds self and non-self glycolipids and presents them to T-cell receptors on natural killer T-cells. This chain is Antigen-presenting glycoprotein CD1d1 (Cd1d1), found in Mus musculus (Mouse).